We begin with the raw amino-acid sequence, 854 residues long: Transcription factor asR3 (854 aa).

Positions 19–45 form a DNA-binding region, zn(2)-C6 fungal-type; it reads CWECRRRKIKCDRNDPCAHCIRHETQC. The tract at residues 56-156 is disordered; that stretch reads TDSDVSRTRP…SLSTNTSPSA (101 aa). 2 stretches are compositionally biased toward polar residues: residues 78-90 and 125-145; these read ASGS…TRPS and LNPS…SSRG. Residues 146-156 show a composition bias toward low complexity; the sequence is PSLSTNTSPSA.

The protein localises to the nucleus. In terms of biological role, transcription factor; part of the gene cluster that mediates the biosynthesis of xenovulene A, an unusual meroterpenoid that has potent inhibitory effects on the human gamma-aminobutyrate A (GABAA) benzodiazepine receptor. This chain is Transcription factor asR3, found in Sarocladium schorii (Acremonium strictum (strain IMI 501407)).